A 73-amino-acid chain; its full sequence is Beta-defensin 108B (73 aa).

Positions 1-22 (MRIAVLLFAIFFFMSQVLPARG) are cleaved as a signal peptide. 3 disulfides stabilise this stretch: C28/C55, C35/C49, and C39/C56.

Belongs to the beta-defensin family. As to expression, specifically expressed in testis. Low expression is detected also in liver.

It is found in the secreted. In terms of biological role, has antibacterial activity. In Homo sapiens (Human), this protein is Beta-defensin 108B (DEFB108B).